The chain runs to 129 residues: Large ribosomal subunit protein uL22 (129 aa).

This sequence belongs to the universal ribosomal protein uL22 family. In terms of assembly, part of the 50S ribosomal subunit.

In terms of biological role, this protein binds specifically to 23S rRNA; its binding is stimulated by other ribosomal proteins, e.g. L4, L17, and L20. It is important during the early stages of 50S assembly. It makes multiple contacts with different domains of the 23S rRNA in the assembled 50S subunit and ribosome. Functionally, the globular domain of the protein is located near the polypeptide exit tunnel on the outside of the subunit, while an extended beta-hairpin is found that lines the wall of the exit tunnel in the center of the 70S ribosome. This Rhizobium meliloti (strain 1021) (Ensifer meliloti) protein is Large ribosomal subunit protein uL22.